The following is a 387-amino-acid chain: Flap endonuclease 1 (387 aa).

Positions 1–104 (MGIKGLSQLI…GELEKRKERQ (104 aa)) are N-domain. Aspartate 34 provides a ligand contact to Mg(2+). Arginine 70 contributes to the DNA binding site. Mg(2+) contacts are provided by aspartate 86, glutamate 158, glutamate 160, aspartate 179, and aspartate 181. An I-domain region spans residues 122–253 (KMVMWNKRTT…KKALAMIKKY (132 aa)). Glutamate 158 is a DNA binding site. DNA-binding residues include glycine 231 and aspartate 233. Aspartate 233 is a Mg(2+) binding site. The interval 332-387 (SSRGKPTQTRLDGFFTPVASSSTTKKKAPAKKDDKKSATDKKRKAADASTSSKKKK) is disordered. An interaction with PCNA region spans residues 338–346 (TQTRLDGFF). Over residues 361–371 (AKKDDKKSATD) the composition is skewed to basic and acidic residues. Residues 378–387 (DASTSSKKKK) show a composition bias toward low complexity.

This sequence belongs to the XPG/RAD2 endonuclease family. FEN1 subfamily. Interacts with PCNA. Three molecules of FEN1 bind to one PCNA trimer with each molecule binding to one PCNA monomer. PCNA stimulates the nuclease activity without altering cleavage specificity. Mg(2+) serves as cofactor. In terms of processing, phosphorylated. Phosphorylation upon DNA damage induces relocalization to the nuclear plasma.

The protein localises to the nucleus. It is found in the nucleolus. It localises to the nucleoplasm. The protein resides in the mitochondrion. In terms of biological role, structure-specific nuclease with 5'-flap endonuclease and 5'-3' exonuclease activities involved in DNA replication and repair. During DNA replication, cleaves the 5'-overhanging flap structure that is generated by displacement synthesis when DNA polymerase encounters the 5'-end of a downstream Okazaki fragment. It enters the flap from the 5'-end and then tracks to cleave the flap base, leaving a nick for ligation. Also involved in the long patch base excision repair (LP-BER) pathway, by cleaving within the apurinic/apyrimidinic (AP) site-terminated flap. Acts as a genome stabilization factor that prevents flaps from equilibrating into structures that lead to duplications and deletions. Also possesses 5'-3' exonuclease activity on nicked or gapped double-stranded DNA, and exhibits RNase H activity. Also involved in replication and repair of rDNA and in repairing mitochondrial DNA. The chain is Flap endonuclease 1 from Naegleria gruberi (Amoeba).